We begin with the raw amino-acid sequence, 449 residues long: Phosphoglucosamine mutase (449 aa).

Catalysis depends on serine 101, which acts as the Phosphoserine intermediate. Mg(2+) contacts are provided by serine 101, aspartate 241, aspartate 243, and aspartate 245. Serine 101 carries the post-translational modification Phosphoserine.

The protein belongs to the phosphohexose mutase family. Requires Mg(2+) as cofactor. Activated by phosphorylation.

The catalysed reaction is alpha-D-glucosamine 1-phosphate = D-glucosamine 6-phosphate. In terms of biological role, catalyzes the conversion of glucosamine-6-phosphate to glucosamine-1-phosphate. This Acetivibrio thermocellus (strain ATCC 27405 / DSM 1237 / JCM 9322 / NBRC 103400 / NCIMB 10682 / NRRL B-4536 / VPI 7372) (Clostridium thermocellum) protein is Phosphoglucosamine mutase.